Reading from the N-terminus, the 313-residue chain is tRNA dimethylallyltransferase (313 aa).

Residue 11–18 (GPTAAGKS) participates in ATP binding. Residue 13–18 (TAAGKS) participates in substrate binding. Interaction with substrate tRNA regions lie at residues 36–39 (DSAT), 160–164 (QRIQR), and 244–249 (RCVGYR).

The protein belongs to the IPP transferase family. Monomer. Requires Mg(2+) as cofactor.

It catalyses the reaction adenosine(37) in tRNA + dimethylallyl diphosphate = N(6)-dimethylallyladenosine(37) in tRNA + diphosphate. Functionally, catalyzes the transfer of a dimethylallyl group onto the adenine at position 37 in tRNAs that read codons beginning with uridine, leading to the formation of N6-(dimethylallyl)adenosine (i(6)A). The polypeptide is tRNA dimethylallyltransferase (Bordetella parapertussis (strain 12822 / ATCC BAA-587 / NCTC 13253)).